Consider the following 804-residue polypeptide: Ribonucleoside-diphosphate reductase large subunit (804 aa).

One can recognise an ATP-cone domain in the interval 1-92; it reads MYVLNRKGEE…TDNLHKNTSD (92 aa). ATP-binding positions include 5-6, 11-17, Thr-53, and Asp-57; these read NR and EDISFDQ. Residue Ser-216 participates in GDP binding. A disulfide bridge connects residues Cys-217 and Cys-442. DTTP contacts are provided by residues 225-227, Lys-242, Arg-255, and 262-263; these read DSI and RG. Asn-425 serves as a coordination point for GDP. Asn-425 acts as the Proton acceptor in catalysis. Residue Cys-427 is the Cysteine radical intermediate of the active site. GDP is bound by residues Glu-429 and 603 to 606; that span reads TAST. The active-site Proton acceptor is the Glu-429.

It belongs to the ribonucleoside diphosphate reductase large chain family. Heterodimer of a large and a small subunit.

The enzyme catalyses a 2'-deoxyribonucleoside 5'-diphosphate + [thioredoxin]-disulfide + H2O = a ribonucleoside 5'-diphosphate + [thioredoxin]-dithiol. Under complex allosteric control mediated by deoxynucleoside triphosphates and ATP binding to separate specificity and activation sites on the large subunit. The type of nucleotide bound at the specificity site determines substrate preference. It seems probable that ATP makes the enzyme reduce CDP and UDP, dGTP favors ADP reduction and dTTP favors GDP reduction. Stimulated by ATP and inhibited by dATP binding to the activity site. In terms of biological role, provides the precursors necessary for DNA synthesis. Catalyzes the biosynthesis of deoxyribonucleotides from the corresponding ribonucleotides. The protein is Ribonucleoside-diphosphate reductase large subunit (RNR1) of Plasmodium falciparum (isolate FCR-3 / Gambia).